We begin with the raw amino-acid sequence, 309 residues long: Zinc finger CCCH domain-containing protein 31 (309 aa).

Residues 1-36 (MEGAGAARKRSRPDTANGGAAGGKRSRETESFQTGL) form a disordered region. 2 C3H1-type zinc fingers span residues 37-65 (SSKL…HFVP) and 103-131 (SGKT…HGER). The interval 86–106 (ARAPMDHAAGGNSHPASSGKT) is disordered. One can recognise a KH domain in the interval 175 to 239 (SATAKISVDA…DQIKQASNMV (65 aa)). Residues 249–273 (STPAKKPAGSAAGAAPAGRGGPGGR) form a disordered region. The span at 251–265 (PAKKPAGSAAGAAPA) shows a compositional bias: low complexity. The C3H1-type 3 zinc finger occupies 275–302 (NYKTKLCENFVKGTCTFGDRCHFAHGEN).

This Oryza sativa subsp. japonica (Rice) protein is Zinc finger CCCH domain-containing protein 31.